The primary structure comprises 271 residues: Bifunctional protein FolD (271 aa).

NADP(+) is bound by residues 154 to 156 (GRS), Thr181, and Ile222.

It belongs to the tetrahydrofolate dehydrogenase/cyclohydrolase family. Homodimer.

It catalyses the reaction (6R)-5,10-methylene-5,6,7,8-tetrahydrofolate + NADP(+) = (6R)-5,10-methenyltetrahydrofolate + NADPH. The catalysed reaction is (6R)-5,10-methenyltetrahydrofolate + H2O = (6R)-10-formyltetrahydrofolate + H(+). It participates in one-carbon metabolism; tetrahydrofolate interconversion. Functionally, catalyzes the oxidation of 5,10-methylenetetrahydrofolate to 5,10-methenyltetrahydrofolate and then the hydrolysis of 5,10-methenyltetrahydrofolate to 10-formyltetrahydrofolate. The protein is Bifunctional protein FolD of Thermosipho melanesiensis (strain DSM 12029 / CIP 104789 / BI429).